Consider the following 233-residue polypeptide: 2,3,4,5-tetrahydropyridine-2,6-dicarboxylate N-acetyltransferase (233 aa).

The protein belongs to the transferase hexapeptide repeat family. DapH subfamily.

It carries out the reaction (S)-2,3,4,5-tetrahydrodipicolinate + acetyl-CoA + H2O = L-2-acetamido-6-oxoheptanedioate + CoA. The protein operates within amino-acid biosynthesis; L-lysine biosynthesis via DAP pathway; LL-2,6-diaminopimelate from (S)-tetrahydrodipicolinate (acetylase route): step 1/3. Functionally, catalyzes the transfer of an acetyl group from acetyl-CoA to tetrahydrodipicolinate. The sequence is that of 2,3,4,5-tetrahydropyridine-2,6-dicarboxylate N-acetyltransferase from Enterococcus faecalis (strain ATCC 700802 / V583).